We begin with the raw amino-acid sequence, 93 residues long: Aspartyl/glutamyl-tRNA(Asn/Gln) amidotransferase subunit C (93 aa).

The protein belongs to the GatC family. As to quaternary structure, heterotrimer of A, B and C subunits.

The catalysed reaction is L-glutamyl-tRNA(Gln) + L-glutamine + ATP + H2O = L-glutaminyl-tRNA(Gln) + L-glutamate + ADP + phosphate + H(+). It carries out the reaction L-aspartyl-tRNA(Asn) + L-glutamine + ATP + H2O = L-asparaginyl-tRNA(Asn) + L-glutamate + ADP + phosphate + 2 H(+). Allows the formation of correctly charged Asn-tRNA(Asn) or Gln-tRNA(Gln) through the transamidation of misacylated Asp-tRNA(Asn) or Glu-tRNA(Gln) in organisms which lack either or both of asparaginyl-tRNA or glutaminyl-tRNA synthetases. The reaction takes place in the presence of glutamine and ATP through an activated phospho-Asp-tRNA(Asn) or phospho-Glu-tRNA(Gln). This is Aspartyl/glutamyl-tRNA(Asn/Gln) amidotransferase subunit C from Methanothrix thermoacetophila (strain DSM 6194 / JCM 14653 / NBRC 101360 / PT) (Methanosaeta thermophila).